Here is a 107-residue protein sequence, read N- to C-terminus: Phycocyanobilin lyase subunit beta (107 aa).

It belongs to the CpcE/RpcE/PecE family. As to quaternary structure, cpcE and CpcF associate to form a lyase.

Functionally, required for the chromophorylation of the CpcA gene product. This chain is Phycocyanobilin lyase subunit beta (cpcF), found in Mastigocladus laminosus (Fischerella sp.).